The primary structure comprises 136 residues: Large ribosomal subunit protein uL16 (136 aa).

It belongs to the universal ribosomal protein uL16 family. As to quaternary structure, part of the 50S ribosomal subunit.

Binds 23S rRNA and is also seen to make contacts with the A and possibly P site tRNAs. This is Large ribosomal subunit protein uL16 from Shewanella denitrificans (strain OS217 / ATCC BAA-1090 / DSM 15013).